The following is a 375-amino-acid chain: Eukaryotic translation initiation factor 3 subunit M (375 aa).

Positions 180–339 constitute a PCI domain; that stretch reads AAAKVMVELL…RKVVVSHSTH (160 aa).

The protein belongs to the eIF-3 subunit M family. As to quaternary structure, component of the eukaryotic translation initiation factor 3 (eIF-3) complex, which is composed of 13 subunits: eif3a, eif3b, eif3c, eif3d, eif3e, eif3f, eif3g, eif3h, eif3i, eif3j, eif3k, eif3l and eif3m.

The protein localises to the cytoplasm. Functionally, component of the eukaryotic translation initiation factor 3 (eIF-3) complex, which is involved in protein synthesis of a specialized repertoire of mRNAs and, together with other initiation factors, stimulates binding of mRNA and methionyl-tRNAi to the 40S ribosome. The eIF-3 complex specifically targets and initiates translation of a subset of mRNAs involved in cell proliferation. The polypeptide is Eukaryotic translation initiation factor 3 subunit M (eif3m) (Danio rerio (Zebrafish)).